The chain runs to 333 residues: Lipoyl synthase (333 aa).

The tract at residues Met1–Lys29 is disordered. The [4Fe-4S] cluster site is built by Cys80, Cys85, Cys91, Cys106, Cys110, Cys113, and Ser320. A Radical SAM core domain is found at Cys91–Thr309.

The protein belongs to the radical SAM superfamily. Lipoyl synthase family. Requires [4Fe-4S] cluster as cofactor.

The protein resides in the cytoplasm. It carries out the reaction [[Fe-S] cluster scaffold protein carrying a second [4Fe-4S](2+) cluster] + N(6)-octanoyl-L-lysyl-[protein] + 2 oxidized [2Fe-2S]-[ferredoxin] + 2 S-adenosyl-L-methionine + 4 H(+) = [[Fe-S] cluster scaffold protein] + N(6)-[(R)-dihydrolipoyl]-L-lysyl-[protein] + 4 Fe(3+) + 2 hydrogen sulfide + 2 5'-deoxyadenosine + 2 L-methionine + 2 reduced [2Fe-2S]-[ferredoxin]. Its pathway is protein modification; protein lipoylation via endogenous pathway; protein N(6)-(lipoyl)lysine from octanoyl-[acyl-carrier-protein]: step 2/2. Its function is as follows. Catalyzes the radical-mediated insertion of two sulfur atoms into the C-6 and C-8 positions of the octanoyl moiety bound to the lipoyl domains of lipoate-dependent enzymes, thereby converting the octanoylated domains into lipoylated derivatives. This Ralstonia nicotianae (strain ATCC BAA-1114 / GMI1000) (Ralstonia solanacearum) protein is Lipoyl synthase.